The primary structure comprises 630 residues: Low affinity heme transporter str3 (630 aa).

Over residues 1 to 26 (MEAKETHSISDHEVELQDAKPEEKSE) the composition is skewed to basic and acidic residues. Residues 1 to 51 (MEAKETHSISDHEVELQDAKPEEKSENGNFVFEKAFSSDEEKGSGYNTNET) form a disordered region. At 1 to 79 (MEAKETHSIS…VRDSIYQNKR (79 aa)) the chain is on the cytoplasmic side. Phosphoserine is present on residues serine 10 and serine 38. The helical transmembrane segment at 80–100 (GMYLAYAFGIAILACSWASAI) threads the bilayer. The Extracellular segment spans residues 101–120 (QSSTTYSYQVYATASFNRTS). The chain crosses the membrane as a helical span at residues 121–141 (MISTLEIATAIISSVCKPILG). At 142 to 154 (KFSDITSRPMTYT) the chain is on the cytoplasmic side. The helical transmembrane segment at 155 to 175 (LVLLFYVIGFIVVASSSTISA) threads the bilayer. Position 176 (tyrosine 176) is a topological domain, extracellular. The helical transmembrane segment at 177–197 (VIGSVFISIGSSGLDYLNTLV) threads the bilayer. Residues 198-208 (VGDLTSLKWRG) are Cytoplasmic-facing. Residues 209 to 229 (FMTALLSTPYIATVWFTGFIV) form a helical membrane-spanning segment. At 230–241 (QGIIDSNWRWGY) the chain is on the extracellular side. The chain crosses the membrane as a helical span at residues 242 to 262 (GMFAIIMPAVMTPAVIILMYL). Topologically, residues 263–302 (ERQANKDENIKKIINYQTEEKNKNKQSKWQKLWKAVLEVD) are cytoplasmic. A helical transmembrane segment spans residues 303-323 (LFGLILLGVGWSILLLPFSLT). The Extracellular portion of the chain corresponds to 324–335 (SYAKNGWKNPSM). The helical transmembrane segment at 336–356 (IAMMVVGGVILIAYSGYEMFI) threads the bilayer. Residues 357-370 (APYPSCPRRVMNRT) are Cytoplasmic-facing. A helical transmembrane segment spans residues 371–391 (FITAVIIDFFYYLAGYLQSMY). At 392–406 (FTTYTWILYDWSYRD) the chain is on the extracellular side. A helical transmembrane segment spans residues 407–427 (WTYFNNTMTIALCVFGVFAGA). Residues 428-439 (MHRVFHRYKYLQ) lie on the Cytoplasmic side of the membrane. A helical transmembrane segment spans residues 440 to 460 (IIGLVIKIVGYGILIRPNFAA). Residues 461-465 (TGKVD) are Extracellular-facing. Residues 466–486 (LAWSLILIGMGGSFSVVGSQV) traverse the membrane as a helical segment. Topologically, residues 487–502 (SCQASVPHQDLAIASS) are cytoplasmic. A helical transmembrane segment spans residues 503-523 (LLPLYTNIGGAIGAAIASPIF). The tract at residues 522–576 (IFSNKVPKYLREYLPSSINDTQVYNFYSDSSLIREYPVGTEIRDGAIKAYSRSMF) is heme binding. Topologically, residues 524–574 (SNKVPKYLREYLPSSINDTQVYNFYSDSSLIREYPVGTEIRDGAIKAYSRS) are extracellular. A helical transmembrane segment spans residues 575-595 (MFFLLVPAVSLSFIPLAAAFW). Over 596-630 (QSNFYLGNQQNAVEGDQDHKKKGDKETTQEEKIII) the chain is Cytoplasmic. The segment at 610 to 630 (GDQDHKKKGDKETTQEEKIII) is disordered. The span at 611–630 (DQDHKKKGDKETTQEEKIII) shows a compositional bias: basic and acidic residues.

This sequence belongs to the major facilitator superfamily.

The protein localises to the cell membrane. Functionally, low affinity heme transporter involved in the assimilation of exogenous heme during conditions of low cellular iron. The protein is Low affinity heme transporter str3 of Schizosaccharomyces pombe (strain 972 / ATCC 24843) (Fission yeast).